The chain runs to 598 residues: Elongation factor 4 (598 aa).

In terms of domain architecture, tr-type G spans Lys4–Gln181. GTP contacts are provided by residues Asp16–Thr21 and Asn128–Asp131.

Belongs to the TRAFAC class translation factor GTPase superfamily. Classic translation factor GTPase family. LepA subfamily.

Its subcellular location is the cell membrane. It carries out the reaction GTP + H2O = GDP + phosphate + H(+). Required for accurate and efficient protein synthesis under certain stress conditions. May act as a fidelity factor of the translation reaction, by catalyzing a one-codon backward translocation of tRNAs on improperly translocated ribosomes. Back-translocation proceeds from a post-translocation (POST) complex to a pre-translocation (PRE) complex, thus giving elongation factor G a second chance to translocate the tRNAs correctly. Binds to ribosomes in a GTP-dependent manner. The polypeptide is Elongation factor 4 (Mesomycoplasma hyopneumoniae (strain J / ATCC 25934 / NCTC 10110) (Mycoplasma hyopneumoniae)).